The following is a 412-amino-acid chain: Double C2-like domain-containing protein beta (412 aa).

The interval 1 to 36 (MTLRRRGEKATISIQEHMAIDVCPGPIRPIKQISDY) is negatively regulates targeting to plasma membrane. Residues 1-90 (MTLRRRGEKA…EDVDQLFGAY (90 aa)) form a mediates interaction with DYNLT1 region. The segment at 38-123 (PRFPRGLPPT…PDADGYESDD (86 aa)) is disordered. A compositionally biased stretch (low complexity) spans 49-73 (APRASAPPDAPARSPAATAGPRSPS). The span at 95-108 (GPSPGPSPVRPPAK) shows a compositional bias: pro residues. Residues 112–123 (DEPDADGYESDD) show a composition bias toward acidic residues. 2 consecutive C2 domains span residues 126-250 (ALGT…SICL) and 266-399 (ERGR…ERWH). Positions 157, 163, 218, 220, 297, 303, 357, 359, and 365 each coordinate Ca(2+). The interval 257-375 (DKAEDKSLEE…FIGGVVLGIN (119 aa)) is mediates interaction with STXBP3. Ser-411 is modified (phosphoserine).

In terms of assembly, interacts with STX4; the interaction is calcium-dependent, increased by insulin and glucose, and mediates vesicle fusion with plasma membrane in pancreatic cells and adipocytes. Interacts with STXBP3; the interaction is direct, occurs at the cell membrane and regulates glucose-stimulated insulin secretion. Interacts with cytoplasmic dynein light chain DYNLT1. Interacts with the SNARE (soluble N-ethylmaleimide-sensitive factor attached protein receptor) complex composed of SNAP25, STX1A and VAMP2; the interaction is calcium-dependent and competitive with SYT1. May interact with UNC13A; the interaction mediates targeting to the plasma membrane. Ca(2+) is required as a cofactor. Expressed in brain; highly enriched in neurons.

The protein resides in the cytoplasm. The protein localises to the cytoplasmic granule. It localises to the cell membrane. Calcium sensor which positively regulates SNARE-dependent fusion of vesicles with membranes. Binds phospholipids in a calcium-dependent manner and may act at the priming stage of fusion by modifying membrane curvature to stimulate fusion. Involved in calcium-triggered exocytosis in chromaffin cells and calcium-dependent spontaneous release of neurotransmitter in absence of action potentials in neuronal cells. Involved both in glucose-stimulated insulin secretion in pancreatic cells and insulin-dependent GLUT4 transport to the plasma membrane in adipocytes. This is Double C2-like domain-containing protein beta (Doc2b) from Rattus norvegicus (Rat).